A 215-amino-acid polypeptide reads, in one-letter code: Pyrrolidone-carboxylate peptidase (215 aa).

Active-site residues include Glu80, Cys143, and His167.

The protein belongs to the peptidase C15 family. As to quaternary structure, homotetramer.

The protein resides in the cytoplasm. It catalyses the reaction Release of an N-terminal pyroglutamyl group from a polypeptide, the second amino acid generally not being Pro.. Removes 5-oxoproline from various penultimate amino acid residues except L-proline. In Bacillus cereus (strain G9842), this protein is Pyrrolidone-carboxylate peptidase.